Reading from the N-terminus, the 401-residue chain is MNSISKVRKLGKYFLIIDNMFVVIGFYAVFPLISIHFVEQLGWTAFLVGFALGLRQFIQQGLGIIGGAFADKLGAKPMIVSGLFMRTIGFIIMSLAHTPTLLCAACILSALGGTLFDPPRTALVIKLIRPWKLGRFYSILMLEDSICAIIGITLGSWLLQQYNFQLVCLTGAILFFIAGMFNAWRLPAYKISSSHLSLLDGIKQVLHNQKFIIYTLTLSGYYILSAQVMLMLPIRMHEISGQLSYIKYIYITEAILSLLLIIPITYWMEKYFKLETRLMLGLVIMIISLSPIGSVNNLYELLILISLFYIGSIVAEPARETLSALLTNYKARSSYIGFNKLSLALGGTLGYSGGGWLYDLGKELNFYQLPWIALSIIGTITVLILYYQFRYCSIQPSLYTD.

A run of 11 helical transmembrane segments spans residues 13 to 33 (YFLI…FPLI), 34 to 54 (SIHF…ALGL), 88 to 108 (IGFI…ACIL), 139 to 159 (ILML…SWLL), 164 to 184 (FQLV…FNAW), 211 to 231 (FIIY…VMLM), 248 to 268 (YIYI…TYWM), 275 to 295 (ETRL…IGSV), 298 to 318 (LYEL…AEPA), 341 to 361 (LSLA…YDLG), and 366 to 386 (FYQL…LILY).

Belongs to the major facilitator superfamily. DHA1 family. MdtH (TC 2.A.1.2.21) subfamily.

Its subcellular location is the cell inner membrane. The chain is Multidrug resistance protein MdtH from Blochmanniella floridana.